A 430-amino-acid polypeptide reads, in one-letter code: Adenylosuccinate synthetase (430 aa).

GTP contacts are provided by residues 12 to 18 and 40 to 42; these read GDEGKGK and GHT. The active-site Proton acceptor is the Asp-13. Asp-13 and Gly-40 together coordinate Mg(2+). Residues 13–16, 38–41, Thr-130, Arg-144, Gln-224, Thr-239, and Arg-303 each bind IMP; these read DEGK and NAGH. His-41 functions as the Proton donor in the catalytic mechanism. 299–305 contributes to the substrate binding site; it reads TNTGRPR. Residues Arg-305, 331 to 333, and 413 to 415 contribute to the GTP site; these read KLD and STS.

This sequence belongs to the adenylosuccinate synthetase family. As to quaternary structure, homodimer. The cofactor is Mg(2+).

Its subcellular location is the cytoplasm. The enzyme catalyses IMP + L-aspartate + GTP = N(6)-(1,2-dicarboxyethyl)-AMP + GDP + phosphate + 2 H(+). It functions in the pathway purine metabolism; AMP biosynthesis via de novo pathway; AMP from IMP: step 1/2. Plays an important role in the de novo pathway of purine nucleotide biosynthesis. Catalyzes the first committed step in the biosynthesis of AMP from IMP. The sequence is that of Adenylosuccinate synthetase from Rhodopseudomonas palustris (strain HaA2).